A 35-amino-acid chain; its full sequence is Turgencin-B (35 aa).

A methionine sulfoxide mark is found at Met5 and Met9. Cystine bridges form between Cys7-Cys31, Cys11-Cys27, and Cys16-Cys24. Glycine amide is present on Gly35.

Oxidation likely reduces antimicrobial activity against Gram-positive bacteria and Gram-negative bacteria.

Its subcellular location is the secreted. In terms of biological role, has antimicrobial activity against Gram-positive bacteria (C.glutamicum ATCC 13032 (MIC=1.6 uM) and B.subtilis ATCC 23857 (MIC=1.6 uM)) and Gram-negative bacteria (E.coli ATCC 25922 (MIC=12.5 uM) and P.aeruginosa ATCC 27853 (MIC=25.0 uM)). Displays very low activity against the Gram-positive bacteria S.aureus ATCC 9144 (MIC&gt;100 uM). This chain is Turgencin-B, found in Synoicum turgens (Colonial ascidian).